The chain runs to 537 residues: NEDD4-binding protein 3 (537 aa).

Ser172 carries the post-translational modification Phosphoserine. Disordered stretches follow at residues 173–234 (LDEG…VLSC), 328–361 (KELR…EARW), and 423–458 (QEQA…REGA). The segment covering 178–207 (PEPSLSDSSSGGSFGRSPGTGPSPFSSSLG) has biased composition (low complexity). The stretch at 295 to 501 (VERLHEVAQK…RVLRYQREIQ (207 aa)) forms a coiled coil. The segment covering 351-361 (PNARPEEEARW) has biased composition (basic and acidic residues).

Belongs to the N4BP3 family. Binds NEDD4. Interacts with 14-3-3 proteins. Interacts with MAVS.

The protein localises to the cytoplasmic vesicle. It is found in the cell projection. It localises to the axon. The protein resides in the dendrite. Plays a positive role in the antiviral innate immune signaling pathway. Mechanistically, interacts with MAVS and functions as a positive regulator to promote 'Lys-63'-linked polyubiquitination of MAVS and thus strengthens the interaction between MAVS and TRAF2. Also plays a role in axon and dendrite arborization during cranial nerve development. May also be important for neural crest migration and early development of other anterior structures including eye, brain and cranial cartilage. The protein is NEDD4-binding protein 3 (N4bp3) of Mus musculus (Mouse).